The chain runs to 130 residues: Small ribosomal subunit protein uS9 (130 aa).

Residues 109–130 (RMKERRKYGLKKARKAPQFSKR) are disordered. A compositionally biased stretch (basic residues) spans 111–130 (KERRKYGLKKARKAPQFSKR).

This sequence belongs to the universal ribosomal protein uS9 family.

The chain is Small ribosomal subunit protein uS9 from Caldanaerobacter subterraneus subsp. tengcongensis (strain DSM 15242 / JCM 11007 / NBRC 100824 / MB4) (Thermoanaerobacter tengcongensis).